The primary structure comprises 351 residues: MGKLQDGIAIKRINDAITTFKNYKLDELEQGGSMAINTLSNVRAHVGLAWPAILRNCLIHTSSHLGFMKFMIDIATTWKVGAFTLLGSVGDEDPFTDVDLIYTKTCLHLGLKDNDFLQFPEEFAYEANSFLEAQSMNARVDMLTGVHNIEDKYVFRMQSISKFLKAYYTASEDVAYLTGFIKPDDSKDSILSAELLKAQVTSEVLRVRNLITTKIQKYINLYEDSQLPHFRQAALSYTQDWDVDGGVPAALPQPDITDDESPVTNPGPSAPPVSKGADQPEDEEMIRKKVETSKDAPPKAVPSGNVSARGIPAFLEDDMSEMDAPDGFHDYLTREHENNFDLAQLGLAPSV.

Positions 246–308 are disordered; sequence GVPAALPQPD…KAVPSGNVSA (63 aa). The segment covering 285 to 297 has biased composition (basic and acidic residues); the sequence is MIRKKVETSKDAP.

This sequence belongs to the phytoreovirus minor outer capsid protein P9 family.

The protein resides in the virion. Its subcellular location is the host cytoplasm. Functionally, minor outer capsid protein. This Rice dwarf virus (isolate O) (RDV) protein is Minor outer capsid protein P9.